The primary structure comprises 226 residues: ATP synthase F(0) complex subunit a (226 aa).

6 helical membrane-spanning segments follow: residues Phe-6–Phe-26, Trp-68–Leu-88, Gln-97–Phe-117, Ile-138–Val-158, Ile-164–Ile-184, and Ala-189–Ile-209.

Belongs to the ATPase A chain family. Component of the ATP synthase complex composed at least of ATP5F1A/subunit alpha, ATP5F1B/subunit beta, ATP5MC1/subunit c (homooctomer), MT-ATP6/subunit a, MT-ATP8/subunit 8, ATP5ME/subunit e, ATP5MF/subunit f, ATP5MG/subunit g, ATP5MK/subunit k, ATP5MJ/subunit j, ATP5F1C/subunit gamma, ATP5F1D/subunit delta, ATP5F1E/subunit epsilon, ATP5PF/subunit F6, ATP5PB/subunit b, ATP5PD/subunit d, ATP5PO/subunit OSCP. ATP synthase complex consists of a soluble F(1) head domain (subunits alpha(3) and beta(3)) - the catalytic core - and a membrane F(0) domain - the membrane proton channel (subunits c, a, 8, e, f, g, k and j). These two domains are linked by a central stalk (subunits gamma, delta, and epsilon) rotating inside the F1 region and a stationary peripheral stalk (subunits F6, b, d, and OSCP). Interacts with DNAJC30; interaction is direct.

Its subcellular location is the mitochondrion inner membrane. The catalysed reaction is H(+)(in) = H(+)(out). Subunit a, of the mitochondrial membrane ATP synthase complex (F(1)F(0) ATP synthase or Complex V) that produces ATP from ADP in the presence of a proton gradient across the membrane which is generated by electron transport complexes of the respiratory chain. ATP synthase complex consist of a soluble F(1) head domain - the catalytic core - and a membrane F(1) domain - the membrane proton channel. These two domains are linked by a central stalk rotating inside the F(1) region and a stationary peripheral stalk. During catalysis, ATP synthesis in the catalytic domain of F(1) is coupled via a rotary mechanism of the central stalk subunits to proton translocation. With the subunit c (ATP5MC1), forms the proton-conducting channel in the F(0) domain, that contains two crucial half-channels (inlet and outlet) that facilitate proton movement from the mitochondrial intermembrane space (IMS) into the matrix. Protons are taken up via the inlet half-channel and released through the outlet half-channel, following a Grotthuss mechanism. The sequence is that of ATP synthase F(0) complex subunit a from Ovis aries (Sheep).